A 357-amino-acid chain; its full sequence is O-methyltransferase pgmB (357 aa).

Residue Asp-206 coordinates S-adenosyl-L-methionine. The active-site Proton acceptor is the His-256.

This sequence belongs to the class I-like SAM-binding methyltransferase superfamily. Cation-independent O-methyltransferase family.

The protein operates within pigment biosynthesis. It functions in the pathway secondary metabolite biosynthesis. O-methyltransferase; part of the gene cluster that mediates the biosynthesis of pleosporalin A, ascomycone A, as well as a third cryptic naphthoquinone derived pigment, all responsible for the coloration of conidia. Specifically methylates position C-6 of the pgmA product 3-acetonyl-1,6,8-trihydroxy-2-naphthaldehyde to yield fusarubinaldehyde. The pathway begins with the biosynthesis of the cyclized heptaketide 3-acetonyl-1,6,8-trihydroxy-2-naphthaldehyde by the NR-PKS pgmA. The C-6 hydroxyl group is further methylated by the O-methyltransferase pgmB to yield fusarubinaldehyde which is in turn oxidized by the cytochrome P450 monooxygenase pgmC at C-9. The C-1 hydroxyl group is then methylated spontaneously. Although pgmE, pgmD and pgmH are essential for the production of pleosporalin A, it is not the case for the 2 other final products and it remains difficult to assign a specific function to each enzyme. PgmF and pgmG seem not to be involved in pigment biosynthesis although they were regulated by the cluster-specific transcription factor pgmR. This Aspergillus terreus (strain NIH 2624 / FGSC A1156) protein is O-methyltransferase pgmB.